Reading from the N-terminus, the 212-residue chain is Leucyl/phenylalanyl-tRNA--protein transferase (212 aa).

The protein belongs to the L/F-transferase family.

It localises to the cytoplasm. The catalysed reaction is N-terminal L-lysyl-[protein] + L-leucyl-tRNA(Leu) = N-terminal L-leucyl-L-lysyl-[protein] + tRNA(Leu) + H(+). It catalyses the reaction N-terminal L-arginyl-[protein] + L-leucyl-tRNA(Leu) = N-terminal L-leucyl-L-arginyl-[protein] + tRNA(Leu) + H(+). The enzyme catalyses L-phenylalanyl-tRNA(Phe) + an N-terminal L-alpha-aminoacyl-[protein] = an N-terminal L-phenylalanyl-L-alpha-aminoacyl-[protein] + tRNA(Phe). Its function is as follows. Functions in the N-end rule pathway of protein degradation where it conjugates Leu, Phe and, less efficiently, Met from aminoacyl-tRNAs to the N-termini of proteins containing an N-terminal arginine or lysine. The protein is Leucyl/phenylalanyl-tRNA--protein transferase of Paracoccus denitrificans (strain Pd 1222).